The chain runs to 322 residues: Deoxyhypusine hydroxylase (322 aa).

4 HEAT-like PBS-type repeats span residues 76 to 102, 109 to 135, 234 to 260, and 267 to 293; these read LKHE…VMLD, VRHE…SRRE, FKHE…VLKR, and VRHE…HLQD. Positions 78, 79, 111, 112, 236, 237, 269, and 270 each coordinate Fe cation.

It belongs to the deoxyhypusine hydroxylase family. Fe(2+) is required as a cofactor.

The protein localises to the cytoplasm. The protein resides in the nucleus. It carries out the reaction [eIF5A protein]-deoxyhypusine + AH2 + O2 = [eIF5A protein]-hypusine + A + H2O. The protein operates within protein modification; eIF5A hypusination. Catalyzes the hydroxylation of the N(6)-(4-aminobutyl)-L-lysine intermediate to form hypusine, an essential post-translational modification only found in mature eIF-5A factor. The polypeptide is Deoxyhypusine hydroxylase (Eremothecium gossypii (strain ATCC 10895 / CBS 109.51 / FGSC 9923 / NRRL Y-1056) (Yeast)).